A 200-amino-acid chain; its full sequence is MLKEIRPALVMLVALTALTGLVYPLAMTGVAQLLLPAQANGSLIEQNGQVIGSALIGQAFTDARYFHGRPSATTAPDPQDSSKTVPSPYNAANSMGANLGPTSAALKERLTADVDAAKQDNPTSPVPVDLVTSSASGLDPDISPEAALFQVPRVAKARGIDEAKLRALIDSQIQGRELGLLGEPRVNVLKLNLALDRMAA.

The helical transmembrane segment at Leu-9–Ala-31 threads the bilayer. Positions Gly-68–Ala-97 are disordered. Residues Ser-71–Gly-96 are compositionally biased toward polar residues.

It belongs to the KdpC family. The system is composed of three essential subunits: KdpA, KdpB and KdpC.

It is found in the cell inner membrane. Functionally, part of the high-affinity ATP-driven potassium transport (or Kdp) system, which catalyzes the hydrolysis of ATP coupled with the electrogenic transport of potassium into the cytoplasm. This subunit acts as a catalytic chaperone that increases the ATP-binding affinity of the ATP-hydrolyzing subunit KdpB by the formation of a transient KdpB/KdpC/ATP ternary complex. The protein is Potassium-transporting ATPase KdpC subunit of Rhodopseudomonas palustris (strain BisA53).